The sequence spans 361 residues: Dihydroorotate dehydrogenase (quinone) (361 aa).

Residues 67 to 71 and T91 contribute to the FMN site; that span reads AGLDK. K71 lines the substrate pocket. 116-120 serves as a coordination point for substrate; it reads NRMGF. FMN contacts are provided by N145 and N178. Residue N178 participates in substrate binding. Catalysis depends on S181, which acts as the Nucleophile. Residue N183 participates in substrate binding. The FMN site is built by K223 and G251. 252 to 253 contributes to the substrate binding site; that stretch reads NT. FMN-binding positions include G273, G302, and 323 to 324; that span reads YT.

The protein belongs to the dihydroorotate dehydrogenase family. Type 2 subfamily. Monomer. Requires FMN as cofactor.

Its subcellular location is the cell membrane. The enzyme catalyses (S)-dihydroorotate + a quinone = orotate + a quinol. The protein operates within pyrimidine metabolism; UMP biosynthesis via de novo pathway; orotate from (S)-dihydroorotate (quinone route): step 1/1. Its function is as follows. Catalyzes the conversion of dihydroorotate to orotate with quinone as electron acceptor. The chain is Dihydroorotate dehydrogenase (quinone) from Deinococcus geothermalis (strain DSM 11300 / CIP 105573 / AG-3a).